The following is a 367-amino-acid chain: Aminomethyltransferase (367 aa).

It belongs to the GcvT family. As to quaternary structure, the glycine cleavage system is composed of four proteins: P, T, L and H.

It catalyses the reaction N(6)-[(R)-S(8)-aminomethyldihydrolipoyl]-L-lysyl-[protein] + (6S)-5,6,7,8-tetrahydrofolate = N(6)-[(R)-dihydrolipoyl]-L-lysyl-[protein] + (6R)-5,10-methylene-5,6,7,8-tetrahydrofolate + NH4(+). The glycine cleavage system catalyzes the degradation of glycine. The polypeptide is Aminomethyltransferase (Shouchella clausii (strain KSM-K16) (Alkalihalobacillus clausii)).